The chain runs to 395 residues: S-adenosylmethionine synthase (395 aa).

His-12 is a binding site for ATP. Asp-14 is a Mg(2+) binding site. Glu-40 contributes to the K(+) binding site. Residues Glu-53 and Gln-96 each coordinate L-methionine. The segment at 96 to 106 is flexible loop; sequence QSKEIADAVNF. ATP-binding positions include 174–176, 242–243, Asp-251, 257–258, Ala-274, and Lys-278; these read DGK, RF, and RK. Asp-251 serves as a coordination point for L-methionine. Residue Lys-282 coordinates L-methionine.

Belongs to the AdoMet synthase family. Homotetramer; dimer of dimers. Mg(2+) serves as cofactor. The cofactor is K(+).

The protein localises to the cytoplasm. It catalyses the reaction L-methionine + ATP + H2O = S-adenosyl-L-methionine + phosphate + diphosphate. Its pathway is amino-acid biosynthesis; S-adenosyl-L-methionine biosynthesis; S-adenosyl-L-methionine from L-methionine: step 1/1. Functionally, catalyzes the formation of S-adenosylmethionine (AdoMet) from methionine and ATP. The overall synthetic reaction is composed of two sequential steps, AdoMet formation and the subsequent tripolyphosphate hydrolysis which occurs prior to release of AdoMet from the enzyme. The sequence is that of S-adenosylmethionine synthase from Tropheryma whipplei (strain Twist) (Whipple's bacillus).